We begin with the raw amino-acid sequence, 261 residues long: Zinc import ATP-binding protein ZnuC (261 aa).

Positions 6–221 (IRLEQVGVTF…PAFVELFGKN (216 aa)) constitute an ABC transporter domain. Position 38–45 (38–45 (GPNGAGKT)) interacts with ATP.

This sequence belongs to the ABC transporter superfamily. Zinc importer (TC 3.A.1.15.5) family. As to quaternary structure, the complex is composed of two ATP-binding proteins (ZnuC), two transmembrane proteins (ZnuB) and a solute-binding protein (ZnuA).

It localises to the cell inner membrane. The catalysed reaction is Zn(2+)(out) + ATP(in) + H2O(in) = Zn(2+)(in) + ADP(in) + phosphate(in) + H(+)(in). Functionally, part of the ABC transporter complex ZnuABC involved in zinc import. Responsible for energy coupling to the transport system. The protein is Zinc import ATP-binding protein ZnuC of Pseudomonas fluorescens (strain ATCC BAA-477 / NRRL B-23932 / Pf-5).